A 178-amino-acid polypeptide reads, in one-letter code: ATP synthase subunit delta (178 aa).

Belongs to the ATPase delta chain family. F-type ATPases have 2 components, F(1) - the catalytic core - and F(0) - the membrane proton channel. F(1) has five subunits: alpha(3), beta(3), gamma(1), delta(1), epsilon(1). F(0) has three main subunits: a(1), b(2) and c(10-14). The alpha and beta chains form an alternating ring which encloses part of the gamma chain. F(1) is attached to F(0) by a central stalk formed by the gamma and epsilon chains, while a peripheral stalk is formed by the delta and b chains.

It localises to the cell inner membrane. F(1)F(0) ATP synthase produces ATP from ADP in the presence of a proton or sodium gradient. F-type ATPases consist of two structural domains, F(1) containing the extramembraneous catalytic core and F(0) containing the membrane proton channel, linked together by a central stalk and a peripheral stalk. During catalysis, ATP synthesis in the catalytic domain of F(1) is coupled via a rotary mechanism of the central stalk subunits to proton translocation. Its function is as follows. This protein is part of the stalk that links CF(0) to CF(1). It either transmits conformational changes from CF(0) to CF(1) or is implicated in proton conduction. The protein is ATP synthase subunit delta of Stutzerimonas stutzeri (strain A1501) (Pseudomonas stutzeri).